Here is a 967-residue protein sequence, read N- to C-terminus: Probable serine/threonine-protein kinase DDB_G0290621 (967 aa).

3 disordered regions span residues 65–122 (EDSD…KEKE), 215–251 (SSLSSSINNSSNNNSNISSSPLSSSPLTLSSSSSSSS), and 287–326 (QQQLPPPPPSQQQQQQQQQQQQQNNSMLQQSNNNNISPRT). Residues 66–94 (DSDEDDDDEEDEEDEEDSDEEEDDDVVED) are compositionally biased toward acidic residues. Residues 95–122 (DNTKDIGKSRDSDKSIKGKEKGKEKEKE) show a composition bias toward basic and acidic residues. A compositionally biased stretch (low complexity) spans 297–326 (QQQQQQQQQQQQQNNSMLQQSNNNNISPRT). A Protein kinase domain is found at 345–610 (FNDSNKIGEG…EIRSRLSEII (266 aa)). Residues 351-359 (IGEGGQCSI) and Lys-368 contribute to the ATP site. Asp-467 acts as the Proton acceptor in catalysis. Disordered stretches follow at residues 634–667 (DDSLINNNNNNNQNNNNQNNNNNNNNNNNNNNNN), 700–752 (STSN…NNNI), and 862–882 (TSSSSNKNNNNNNNDNNNPSN). A compositionally biased stretch (low complexity) spans 639–666 (NNNNNNNQNNNNQNNNNNNNNNNNNNNN). Positions 863-882 (SSSSNKNNNNNNNDNNNPSN) are enriched in low complexity.

It belongs to the protein kinase superfamily. TKL Ser/Thr protein kinase family.

It catalyses the reaction L-seryl-[protein] + ATP = O-phospho-L-seryl-[protein] + ADP + H(+). The enzyme catalyses L-threonyl-[protein] + ATP = O-phospho-L-threonyl-[protein] + ADP + H(+). The protein is Probable serine/threonine-protein kinase DDB_G0290621 of Dictyostelium discoideum (Social amoeba).